Here is a 569-residue protein sequence, read N- to C-terminus: 5'-AMP-activated protein kinase subunit gamma-2 (569 aa).

The tract at residues 1–222 (MGSAVMDTKK…TRPPLASPTH (222 aa)) is disordered. A phosphoserine mark is found at serine 65, serine 71, serine 73, serine 90, serine 138, serine 143, serine 161, and serine 162. A compositionally biased stretch (low complexity) spans 156-167 (TSGLSSSPSTPT). Threonine 165 is subject to Phosphothreonine. Basic and acidic residues predominate over residues 179–189 (SYKHEPERLEN). The segment covering 192–212 (YASSSPPDTGQRFCPSSFQSP) has biased composition (polar residues). Serine 196 carries the phosphoserine modification. CBS domains are found at residues 275-335 (PTSS…KSPM), 357-415 (TFKP…MSDM), and 430-492 (IGTY…NLDI). Residues arginine 302, 317–322 (MLTITD), valine 362, 383–384 (HR), and lysine 402 contribute to the ADP site. AMP contacts are provided by residues arginine 302, 317–322 (MLTITD), valine 362, histidine 383, 383–384 (HR), lysine 402, threonine 432, alanine 437, 458–459 (SA), 474–477 (SKFD), arginine 501, histidine 530, 530–531 (HR), and 546–549 (SLSD). ATP-binding positions include arginine 302, 317-322 (MLTITD), valine 362, 383-384 (HR), arginine 384, and lysine 402. The short motif at 370 to 391 (LFDAVYSLIKNKIHRLPVIDPI) is the AMPK pseudosubstrate element. ADP-binding positions include 474–477 (SKFD), arginine 501, and 530–531 (HR). ATP is bound by residues 474 to 477 (SKFD), arginine 501, and 530 to 531 (HR). The CBS 4 domain occupies 504–562 (YFEGVVKCNKLEILETIVDRIVRAEVHRLVVVNEADSIVGIISLSDILQALILTPAGAK).

It belongs to the 5'-AMP-activated protein kinase gamma subunit family. In terms of assembly, AMPK is a heterotrimer of an alpha catalytic subunit (PRKAA1 or PRKAA2), a beta (PRKAB1 or PRKAB2) and a gamma non-catalytic subunits (PRKAG1, PRKAG2 or PRKAG3). Interacts with FNIP1 and FNIP2. Phosphorylated by ULK1; leading to negatively regulate AMPK activity and suggesting the existence of a regulatory feedback loop between ULK1 and AMPK. In terms of processing, glycosylated; O-GlcNAcylated by OGT, promoting the AMP-activated protein kinase (AMPK) activity. As to expression, isoform B is ubiquitously expressed except in liver and thymus. The highest level is detected in heart with abundant expression in placenta and testis.

AMP/ATP-binding subunit of AMP-activated protein kinase (AMPK), an energy sensor protein kinase that plays a key role in regulating cellular energy metabolism. In response to reduction of intracellular ATP levels, AMPK activates energy-producing pathways and inhibits energy-consuming processes: inhibits protein, carbohydrate and lipid biosynthesis, as well as cell growth and proliferation. AMPK acts via direct phosphorylation of metabolic enzymes, and by longer-term effects via phosphorylation of transcription regulators. Also acts as a regulator of cellular polarity by remodeling the actin cytoskeleton; probably by indirectly activating myosin. Gamma non-catalytic subunit mediates binding to AMP, ADP and ATP, leading to activate or inhibit AMPK: AMP-binding results in allosteric activation of alpha catalytic subunit (PRKAA1 or PRKAA2) both by inducing phosphorylation and preventing dephosphorylation of catalytic subunits. ADP also stimulates phosphorylation, without stimulating already phosphorylated catalytic subunit. ATP promotes dephosphorylation of catalytic subunit, rendering the AMPK enzyme inactive. This is 5'-AMP-activated protein kinase subunit gamma-2 (PRKAG2) from Homo sapiens (Human).